The chain runs to 178 residues: ATP synthase subunit delta (178 aa).

It belongs to the ATPase delta chain family. F-type ATPases have 2 components, F(1) - the catalytic core - and F(0) - the membrane proton channel. F(1) has five subunits: alpha(3), beta(3), gamma(1), delta(1), epsilon(1). F(0) has three main subunits: a(1), b(2) and c(10-14). The alpha and beta chains form an alternating ring which encloses part of the gamma chain. F(1) is attached to F(0) by a central stalk formed by the gamma and epsilon chains, while a peripheral stalk is formed by the delta and b chains.

The protein localises to the cell membrane. In terms of biological role, f(1)F(0) ATP synthase produces ATP from ADP in the presence of a proton or sodium gradient. F-type ATPases consist of two structural domains, F(1) containing the extramembraneous catalytic core and F(0) containing the membrane proton channel, linked together by a central stalk and a peripheral stalk. During catalysis, ATP synthesis in the catalytic domain of F(1) is coupled via a rotary mechanism of the central stalk subunits to proton translocation. Functionally, this protein is part of the stalk that links CF(0) to CF(1). It either transmits conformational changes from CF(0) to CF(1) or is implicated in proton conduction. In Buchnera aphidicola subsp. Baizongia pistaciae (strain Bp), this protein is ATP synthase subunit delta.